Consider the following 61-residue polypeptide: Protein CopA/IncA (61 aa).

In terms of biological role, controls the copy number in gene replication. In Escherichia coli, this protein is Protein CopA/IncA (copA).